The following is a 306-amino-acid chain: Shugoshin (306 aa).

Residues 28 to 75 (NFKSTNESLIKKNLQLKQQLSQCTKALEKLRNENIALREQNQELIDAT) are a coiled coil. 2 disordered regions span residues 122-196 (PEPS…GRRS) and 223-306 (IAPS…DTFF). A compositionally biased stretch (basic and acidic residues) spans 133 to 161 (PKMECNLEKLDESPVRNFPRSDYEEENKS). The segment covering 167–181 (NGPSSSSSMTQNLEN) has biased composition (polar residues). Over residues 230 to 241 (GGPPKKAPPRKA) the composition is skewed to pro residues.

This sequence belongs to the shugoshin family.

The protein localises to the nucleus. Its subcellular location is the chromosome. The protein resides in the centromere. Functionally, plays a central role in chromosome cohesion during cell division by preventing premature dissociation of cohesin complex from centromeres after prophase, when most of cohesin complex dissociates from chromosomes arms. The protein is Shugoshin (sgo-1) of Caenorhabditis briggsae.